The sequence spans 137 residues: NADH-quinone oxidoreductase subunit A (137 aa).

A run of 3 helical transmembrane segments spans residues 12–32, 66–86, and 96–116; these read WGFA…LGVS, FYLV…LFAW, and TGFV…VYLF.

The protein belongs to the complex I subunit 3 family. NDH-1 is composed of 13 different subunits. Subunits NuoA, H, J, K, L, M, N constitute the membrane sector of the complex.

It is found in the cell inner membrane. It carries out the reaction a quinone + NADH + 5 H(+)(in) = a quinol + NAD(+) + 4 H(+)(out). Functionally, NDH-1 shuttles electrons from NADH, via FMN and iron-sulfur (Fe-S) centers, to quinones in the respiratory chain. The immediate electron acceptor for the enzyme in this species is believed to be ubiquinone. Couples the redox reaction to proton translocation (for every two electrons transferred, four hydrogen ions are translocated across the cytoplasmic membrane), and thus conserves the redox energy in a proton gradient. This is NADH-quinone oxidoreductase subunit A from Pseudomonas fluorescens (strain Pf0-1).